The following is a 393-amino-acid chain: Calreticulin (393 aa).

Positions 1–16 are cleaved as a signal peptide; that stretch reads MLSILLTLLLSKYALG. Asn-27 is a glycosylation site (N-linked (GlcNAc...) asparagine). The cysteines at positions 103 and 135 are disulfide-linked. 4 residues coordinate an alpha-D-glucoside: Tyr-107, Lys-109, Tyr-126, and Asp-133. Repeat copies occupy residues 189 to 200, 208 to 219, 225 to 236, 242 to 253, 257 to 267, 271 to 281, and 285 to 295. Positions 189–253 are 4 X 12 AA approximate repeats; it reads VEEGSLEDDW…DAKKPDDWDD (65 aa). Residues 194 to 277 are disordered; the sequence is LEDDWDMLPP…EYKGEWTPRR (84 aa). Positions 202 to 216 are enriched in basic and acidic residues; sequence PPKKIDDPNDKKPDD. Over residues 217–226 the composition is skewed to acidic residues; it reads WVDEQFIDDP. Basic and acidic residues-rich tracts occupy residues 227–249 and 258–277; these read DDKK…KKPD and EWER…TPRR. The interval 257–295 is 3 X 11 AA approximate repeats; that stretch reads GEWERPQKDNPEYKGEWTPRRIDNPKYKGEWKPVQIDNP. Residue Asp-315 coordinates an alpha-D-glucoside. Residues 351–393 form a disordered region; that stretch reads AEVAKEQSSAKDDKEEAEETKERKELPYDAKASDEPSGDHDEL. A Prevents secretion from ER motif is present at residues 390 to 393; that stretch reads HDEL.

It belongs to the calreticulin family.

It is found in the endoplasmic reticulum lumen. Functionally, molecular calcium-binding chaperone promoting folding, oligomeric assembly and quality control in the ER via the calreticulin/calnexin cycle. This lectin may interact transiently with almost all of the monoglucosylated glycoproteins that are synthesized in the ER. This is Calreticulin from Schistosoma mansoni (Blood fluke).